A 337-amino-acid polypeptide reads, in one-letter code: tRNA N6-adenosine threonylcarbamoyltransferase (337 aa).

Positions 114 and 118 each coordinate Fe cation. Substrate contacts are provided by residues Leu136–Gly140, Asp169, Gly182, Asp186, and Asn275. Asp301 lines the Fe cation pocket.

Belongs to the KAE1 / TsaD family. Requires Fe(2+) as cofactor.

The protein localises to the cytoplasm. The enzyme catalyses L-threonylcarbamoyladenylate + adenosine(37) in tRNA = N(6)-L-threonylcarbamoyladenosine(37) in tRNA + AMP + H(+). In terms of biological role, required for the formation of a threonylcarbamoyl group on adenosine at position 37 (t(6)A37) in tRNAs that read codons beginning with adenine. Is involved in the transfer of the threonylcarbamoyl moiety of threonylcarbamoyl-AMP (TC-AMP) to the N6 group of A37, together with TsaE and TsaB. TsaD likely plays a direct catalytic role in this reaction. The protein is tRNA N6-adenosine threonylcarbamoyltransferase of Streptococcus thermophilus (strain ATCC BAA-491 / LMD-9).